Here is a 337-residue protein sequence, read N- to C-terminus: Protein-glutamate methylesterase/protein-glutamine glutaminase of group 3 operon (337 aa).

Residues 2–119 (KIAIVNDMPL…GDAREAAAPL (118 aa)) form the Response regulatory domain. Residue aspartate 53 is modified to 4-aspartylphosphate. The CheB-type methylesterase domain maps to 144–337 (PLREASQRRG…AGRLTEFFAK (194 aa)). Catalysis depends on residues serine 160, histidine 187, and aspartate 280.

This sequence belongs to the CheB family. Phosphorylated by CheA. Phosphorylation of the N-terminal regulatory domain activates the methylesterase activity.

The protein localises to the cytoplasm. The enzyme catalyses [protein]-L-glutamate 5-O-methyl ester + H2O = L-glutamyl-[protein] + methanol + H(+). The catalysed reaction is L-glutaminyl-[protein] + H2O = L-glutamyl-[protein] + NH4(+). Functionally, involved in chemotaxis. Part of a chemotaxis signal transduction system that modulates chemotaxis in response to various stimuli. Catalyzes the demethylation of specific methylglutamate residues introduced into the chemoreceptors (methyl-accepting chemotaxis proteins or MCP) by CheR. Also mediates the irreversible deamidation of specific glutamine residues to glutamic acid. This chain is Protein-glutamate methylesterase/protein-glutamine glutaminase of group 3 operon, found in Pseudomonas putida (strain ATCC 47054 / DSM 6125 / CFBP 8728 / NCIMB 11950 / KT2440).